We begin with the raw amino-acid sequence, 177 residues long: Large ribosomal subunit protein uL6 (177 aa).

It belongs to the universal ribosomal protein uL6 family. In terms of assembly, part of the 50S ribosomal subunit.

In terms of biological role, this protein binds to the 23S rRNA, and is important in its secondary structure. It is located near the subunit interface in the base of the L7/L12 stalk, and near the tRNA binding site of the peptidyltransferase center. The polypeptide is Large ribosomal subunit protein uL6 (Methylorubrum populi (strain ATCC BAA-705 / NCIMB 13946 / BJ001) (Methylobacterium populi)).